The sequence spans 380 residues: Queuine tRNA-ribosyltransferase (380 aa).

Asp96 serves as the catalytic Proton acceptor. Substrate-binding positions include 96 to 100 (DSGGF), Asp150, Gln193, and Gly220. The segment at 251–257 (GVGAPDS) is RNA binding. Residue Asp270 is the Nucleophile of the active site. Positions 275-279 (TRIAR) are RNA binding; important for wobble base 34 recognition. Zn(2+) is bound by residues Cys308, Cys310, Cys313, and His339.

It belongs to the queuine tRNA-ribosyltransferase family. In terms of assembly, homodimer. Within each dimer, one monomer is responsible for RNA recognition and catalysis, while the other monomer binds to the replacement base PreQ1. It depends on Zn(2+) as a cofactor.

The catalysed reaction is 7-aminomethyl-7-carbaguanine + guanosine(34) in tRNA = 7-aminomethyl-7-carbaguanosine(34) in tRNA + guanine. It participates in tRNA modification; tRNA-queuosine biosynthesis. Its function is as follows. Catalyzes the base-exchange of a guanine (G) residue with the queuine precursor 7-aminomethyl-7-deazaguanine (PreQ1) at position 34 (anticodon wobble position) in tRNAs with GU(N) anticodons (tRNA-Asp, -Asn, -His and -Tyr). Catalysis occurs through a double-displacement mechanism. The nucleophile active site attacks the C1' of nucleotide 34 to detach the guanine base from the RNA, forming a covalent enzyme-RNA intermediate. The proton acceptor active site deprotonates the incoming PreQ1, allowing a nucleophilic attack on the C1' of the ribose to form the product. After dissociation, two additional enzymatic reactions on the tRNA convert PreQ1 to queuine (Q), resulting in the hypermodified nucleoside queuosine (7-(((4,5-cis-dihydroxy-2-cyclopenten-1-yl)amino)methyl)-7-deazaguanosine). In Streptococcus thermophilus (strain ATCC BAA-491 / LMD-9), this protein is Queuine tRNA-ribosyltransferase.